The chain runs to 379 residues: Mannan endo-1,4-beta-mannosidase 7 (379 aa).

Substrate contacts are provided by Trp64 and Asn179. Catalysis depends on Glu180, which acts as the Proton donor. Tyr260 provides a ligand contact to substrate. Glu300 serves as the catalytic Nucleophile. Trp342 serves as a coordination point for substrate.

Belongs to the glycosyl hydrolase 5 (cellulase A) family. As to expression, expression not detected.

The catalysed reaction is Random hydrolysis of (1-&gt;4)-beta-D-mannosidic linkages in mannans, galactomannans and glucomannans.. This chain is Mannan endo-1,4-beta-mannosidase 7 (MAN7), found in Oryza sativa subsp. japonica (Rice).